A 418-amino-acid polypeptide reads, in one-letter code: Gamma-glutamyl phosphate reductase (418 aa).

Belongs to the gamma-glutamyl phosphate reductase family.

Its subcellular location is the cytoplasm. It carries out the reaction L-glutamate 5-semialdehyde + phosphate + NADP(+) = L-glutamyl 5-phosphate + NADPH + H(+). The protein operates within amino-acid biosynthesis; L-proline biosynthesis; L-glutamate 5-semialdehyde from L-glutamate: step 2/2. Functionally, catalyzes the NADPH-dependent reduction of L-glutamate 5-phosphate into L-glutamate 5-semialdehyde and phosphate. The product spontaneously undergoes cyclization to form 1-pyrroline-5-carboxylate. This is Gamma-glutamyl phosphate reductase from Desulfatibacillum aliphaticivorans.